A 239-amino-acid chain; its full sequence is Ribonuclease 3 (239 aa).

Residues 12-137 (ISRLEALIGY…LIATLYLDGG (126 aa)) enclose the RNase III domain. E50 serves as a coordination point for Mg(2+). The active site involves D54. The Mg(2+) site is built by D123 and E126. E126 is a catalytic residue. Positions 162-231 (DAKTELQEWA…ATRLLEREGV (70 aa)) constitute a DRBM domain.

It belongs to the ribonuclease III family. As to quaternary structure, homodimer. The cofactor is Mg(2+).

It localises to the cytoplasm. The enzyme catalyses Endonucleolytic cleavage to 5'-phosphomonoester.. Digests double-stranded RNA. Involved in the processing of primary rRNA transcript to yield the immediate precursors to the large and small rRNAs (23S and 16S). Processes some mRNAs, and tRNAs when they are encoded in the rRNA operon. Processes pre-crRNA and tracrRNA of type II CRISPR loci if present in the organism. In Agrobacterium fabrum (strain C58 / ATCC 33970) (Agrobacterium tumefaciens (strain C58)), this protein is Ribonuclease 3.